A 142-amino-acid polypeptide reads, in one-letter code: Large ribosomal subunit protein uL11 (142 aa).

The protein belongs to the universal ribosomal protein uL11 family. As to quaternary structure, part of the ribosomal stalk of the 50S ribosomal subunit. Interacts with L10 and the large rRNA to form the base of the stalk. L10 forms an elongated spine to which L12 dimers bind in a sequential fashion forming a multimeric L10(L12)X complex. Post-translationally, one or more lysine residues are methylated.

Functionally, forms part of the ribosomal stalk which helps the ribosome interact with GTP-bound translation factors. This is Large ribosomal subunit protein uL11 from Xylella fastidiosa (strain 9a5c).